The sequence spans 397 residues: CCA-adding enzyme (397 aa).

ATP-binding residues include G32 and R35. 2 residues coordinate CTP: G32 and R35. Mg(2+)-binding residues include D45 and D47. ATP-binding residues include R116, D159, R162, R165, and R168. The CTP site is built by R116, D159, R162, R165, and R168.

Belongs to the tRNA nucleotidyltransferase/poly(A) polymerase family. Bacterial CCA-adding enzyme type 3 subfamily. Homodimer. Requires Mg(2+) as cofactor.

The catalysed reaction is a tRNA precursor + 2 CTP + ATP = a tRNA with a 3' CCA end + 3 diphosphate. It catalyses the reaction a tRNA with a 3' CCA end + 2 CTP + ATP = a tRNA with a 3' CCACCA end + 3 diphosphate. Catalyzes the addition and repair of the essential 3'-terminal CCA sequence in tRNAs without using a nucleic acid template. Adds these three nucleotides in the order of C, C, and A to the tRNA nucleotide-73, using CTP and ATP as substrates and producing inorganic pyrophosphate. tRNA 3'-terminal CCA addition is required both for tRNA processing and repair. Also involved in tRNA surveillance by mediating tandem CCA addition to generate a CCACCA at the 3' terminus of unstable tRNAs. While stable tRNAs receive only 3'-terminal CCA, unstable tRNAs are marked with CCACCA and rapidly degraded. The sequence is that of CCA-adding enzyme from Levilactobacillus brevis (strain ATCC 367 / BCRC 12310 / CIP 105137 / JCM 1170 / LMG 11437 / NCIMB 947 / NCTC 947) (Lactobacillus brevis).